We begin with the raw amino-acid sequence, 417 residues long: Peptidyl-Asp metalloendopeptidase (417 aa).

A signal peptide spans 1–25 (MLSRSIGKAAGGLVLGLSVAAAAHA). H327 is a Zn(2+) binding site. E328 is an active-site residue. The Zn(2+) site is built by H331 and H337.

This sequence belongs to the peptidase M72 family. Requires Zn(2+) as cofactor.

It carries out the reaction Cleavage of Xaa-|-Asp, Xaa-|-Glu and Xaa-|-cysteic acid bonds.. In terms of biological role, metalloprotease, specifically cleaves on the N-terminal side of aspartyl, glutamyl and cysteic acid residues. This is Peptidyl-Asp metalloendopeptidase from Stenotrophomonas maltophilia (strain K279a).